The sequence spans 402 residues: NADH-quinone oxidoreductase subunit D (402 aa).

It belongs to the complex I 49 kDa subunit family. As to quaternary structure, NDH-1 is composed of 14 different subunits. Subunits NuoB, C, D, E, F, and G constitute the peripheral sector of the complex.

The protein resides in the cell inner membrane. The catalysed reaction is a quinone + NADH + 5 H(+)(in) = a quinol + NAD(+) + 4 H(+)(out). In terms of biological role, NDH-1 shuttles electrons from NADH, via FMN and iron-sulfur (Fe-S) centers, to quinones in the respiratory chain. The immediate electron acceptor for the enzyme in this species is believed to be ubiquinone. Couples the redox reaction to proton translocation (for every two electrons transferred, four hydrogen ions are translocated across the cytoplasmic membrane), and thus conserves the redox energy in a proton gradient. This is NADH-quinone oxidoreductase subunit D from Nitrobacter winogradskyi (strain ATCC 25391 / DSM 10237 / CIP 104748 / NCIMB 11846 / Nb-255).